The sequence spans 894 residues: Mitogen-activated protein kinase kinase kinase kinase 3 (894 aa).

M1 is modified (N-acetylmethionine). Positions 16–273 (FELIQRIGSG…AEKLLQHPFV (258 aa)) constitute a Protein kinase domain. ATP is bound by residues 22-30 (IGSGTYGDV), K45, and K48. D136 serves as the catalytic Proton acceptor. S329 and S398 each carry phosphoserine. Positions 410–536 (AHLEDDEGDD…DVPKPISNGL (127 aa)) are disordered. Positions 473–487 (QVPPRPPPPRLPPHK) are enriched in pro residues. Residues 513–529 (NEHRGTNLSRKEKKDVP) are compositionally biased toward basic and acidic residues. Residues 556–867 (PLKIHCASSW…IFRLLGSDRV (312 aa)) enclose the CNH domain.

Belongs to the protein kinase superfamily. STE Ser/Thr protein kinase family. STE20 subfamily. Interacts with SH3GL2. Interaction appears to regulate MAP4K3-mediated JNK activation. Mg(2+) serves as cofactor. In terms of tissue distribution, ubiquitously expressed in all tissues examined, with high levels in heart, brain, placenta, skeletal muscle, kidney and pancreas and lower levels in lung and liver.

It carries out the reaction L-seryl-[protein] + ATP = O-phospho-L-seryl-[protein] + ADP + H(+). It catalyses the reaction L-threonyl-[protein] + ATP = O-phospho-L-threonyl-[protein] + ADP + H(+). Its function is as follows. Serine/threonine kinase that plays a role in the response to environmental stress. Appears to act upstream of the JUN N-terminal pathway. Activator of the Hippo signaling pathway which plays a pivotal role in organ size control and tumor suppression by restricting proliferation and promoting apoptosis. MAP4Ks act in parallel to and are partially redundant with STK3/MST2 and STK4/MST2 in the phosphorylation and activation of LATS1/2, and establish MAP4Ks as components of the expanded Hippo pathway. The polypeptide is Mitogen-activated protein kinase kinase kinase kinase 3 (Homo sapiens (Human)).